Reading from the N-terminus, the 2028-residue chain is MDVTVSELLELFLQSPLVTWVKTFGPFGSGSQDNLTMYMDLVDGIFLNQIMLQIDPRPTNQRINKHVNNDVNLRIQNLTILVRNIKTYYQEVLQQLIVMNLPNVLMIGRDPLSGKSMEEIKKVLLLVLGCAVQCERKEEFIERIKQLDIETQAGIVAHIQEVTHNQENVFDLQWLELPDVAPEELEALSRSMVLHLRRLIDQRDECTELIVDLTQERDYLQAQHPPSPIKSSSADSTPSPTSSLSSEDKQHLAVELADTKARLRRVRQELEDKTEQLVDTRHEVDQLVLELQKVKQENIQLAADARSARAYRDELDSLREKANRVERLELELTRCKEKLHDVDFYKARMEELREDNIILIETKAMLEEQLTAARARGDKVHELEKENLQLKSKLHDLELDRDTDKKRIEELLEENMVLEIAQKQSMNESAHLGWELEQLSKNADLSDASRKSFVFELNECASSRILKLEKENQSLQSTIQGLRDASLVLEESGLKCGELEKENHQLSKKIEKLQTQLEREKQSNQDLETLSEELIREKEQLQSDMETLKADKARQIKDLEQEKDHLNRAMWSLRERSQVSSEARMKDVEKENKALHQTVTEANGKLSQLEFEKRQLHRDLEQAKEKGERAEKLERELQRLQEENGRLARKVTSLETATEKVEALEHESQGLQLENRTLRKSLDTLQNVSLQLEGLERDNKQLDAENLELRRLVETMRFTSTKLAQMERENQQLEREKEELRKNVDLLKALGKKSERLELSYQSVSAENLRLQQSLESSSHKTQTLESELGELEAERQALRRDLEALRLANAQLEGAEKDRKALEQEVAQLEKDKKLLEKEAKRLWQQVELKDAVLDDSTAKLSAVEKESRALDKELARCRDAAGKLKELEKDNRDLTKQVTVHARTLTTLREDLVLEKLKSQQLSSELDKLSQELEKVGLNRELLLQEDDSGSDTKYKILEGRNESALKTTLAMKEEKIVLLEAQMEEKASLNRQLESELQMLKKECETLRQNQGEGQHLQNSFKHPAGKTAASHQGKEAWGPGHKEATMELLRVKDRAIELERNNAALQAEKQLLKEQLQHLETQNVTFSSQILTLQKQSAFLQEHNTTLQTQTAKLQVENSTLSSQSAALTAQYTLLQNHHTAKETENESLQRQQEQLTAAYEALLQDHEHLGTLHERQSAEYEALIRQHSCLKTLHRNLELEHKELGERHGDMLKRKAELEEREKVLTTEREALQQEQRTNALAMGENQRLRGELDRVNFLHHQLKGEYEELHAHTKELKTSLNNAQLELNRWQARFDELKEQHQTMDISLTKLDNHCELLSRLKGNLEEENHHLLSQIQLLSQQNQMLLEQNMENKEQYHEEQKQYIDKLNALRRHKEKLEEKIMDQYKFYDPPPKKKNHWIGAKALVKLIKPKKEGSRERLKSTVDSPPWQLESSDPASPAASQPLRSQAENPDTPALGSNCAEERDAHNGSVGKGPGDLKPKRGSPHRGSLDRTDASTDLAMRSWPSELGSRTCSTSATTTAPSNSTPIARHPGRTKGYNSDDNLCEPSLEFEVPNHRQYVSRPSSLESSRNTSSNSSPLNLKGSSEQLHGRSESFSSEDLIPSRDLATLPREASTPGRNALGRHEYPLPRNGPLPQEGAQKRGTAPPYVGVRPCSASPSSEMVTLEEFLEESNRSSPTHDTPSCRDDLLSDYFRKASDPPAIGGQPGPPAKKEGAKMPTNFVAPTVKMAAPTSEGRPLKPGQYVKPNFRLTEAEAPPSVAPRQAQPPQSLSLGRPRQAPVPPASHAPASRSASLSRAFSLASADLLRASGPEACKQESPQKLGAPEALGGRETGSHTLQSPAPPSSHSLARERTPLVGKAGSSCQGPGPRSRPLDTRRFSLAPPKEERLAPLHQSATAPAIATAGAGAAAAGSGSNSQLLHFSPAAAPAARTKPKAPPRSGEVATITPVRAGLSLSEGDGVPGQGCSEGLPAKSPGRSPDLAPHLGRALEDCSRGSVSKSSPASPEPGGDPQTVWYEYGCV.

In terms of domain architecture, Calponin-homology (CH) spans Leu-11–Ala-131. The disordered stretch occupies residues Ala-222–Gln-250. A phosphoserine mark is found at Ser-227 and Ser-239. The segment covering Ile-229 to Ser-245 has biased composition (low complexity). Coiled coils occupy residues Glu-247–Glu-428, Glu-456–Gly-1017, His-1045–Ile-1094, and Leu-1139–Lys-1393. Ser-486 is modified (phosphoserine). Positions Arg-1011–Phe-1024 are enriched in polar residues. The tract at residues Arg-1011–Pro-1043 is disordered. Residues Lys-1419–Ser-1428 are compositionally biased toward basic and acidic residues. Disordered regions lie at residues Lys-1419–Met-1724 and Ala-1736–Arg-1803. 3 stretches are compositionally biased toward low complexity: residues Ser-1439–Pro-1450, Ser-1517–Pro-1534, and Ser-1568–Leu-1588. Ser-1444 is subject to Phosphoserine. Residues Lys-1589–Ser-1604 show a composition bias toward polar residues. Residue Ser-1601 is modified to Phosphoserine. The GBA signature appears at Cys-1661–Cys-1691. Over residues Pro-1689–Ser-1704 the composition is skewed to basic and acidic residues. The segment covering His-1792–Arg-1803 has biased composition (low complexity). Ser-1806 carries the post-translational modification Phosphoserine. The tract at residues Ser-1816 to Val-2021 is disordered. The segment covering Ser-1842–Ser-1855 has biased composition (polar residues). The span at Arg-1879–Ala-1897 shows a compositional bias: basic and acidic residues. The span at Ser-1902–Ser-1924 shows a compositional bias: low complexity. At Thr-1954 the chain carries Phosphothreonine. The PDZ-binding motif lies at Tyr-2025 to Val-2028. The segment at Gly-2026–Val-2028 is DVL1-binding.

It belongs to the CCDC88 family. Homooligomer. Interacts with DVL1 (via PDZ domain); dissociates following initiation of non-canonical Wnt signaling. Interacts (via C-terminus) with ligand-activated Wnt receptor FZD7; competes with DVL1 for binding to FZD7 and displaces DVL1 from ligand-activated FZD7. Interacts (via GBA motif) with guanine nucleotide-binding protein G(i) alpha subunits GNAI1, GNAI2 and GNAI3 (inactive GDP-bound form); interacts with higher affinity with GNAI1 and GNAI3 than with GNAI2 and interaction leads to G(i) alpha subunit activation. Does not interact with GNAO1.

It is found in the cytoplasm. It localises to the cell junction. Functionally, required for activation of guanine nucleotide-binding proteins (G-proteins) during non-canonical Wnt signaling. Binds to ligand-activated Wnt receptor FZD7, displacing DVL1 from the FZD7 receptor and leading to inhibition of canonical Wnt signaling. Acts as a non-receptor guanine nucleotide exchange factor by also binding to guanine nucleotide-binding protein G(i) alpha (Gi-alpha) subunits, leading to their activation. Binding to Gi-alpha subunits displaces the beta and gamma subunits from the heterotrimeric G-protein complex, triggering non-canonical Wnt responses such as activation of RAC1 and PI3K-AKT signaling. Promotes apical constriction of cells via ARHGEF18. The protein is Protein Daple (CCDC88C) of Homo sapiens (Human).